A 665-amino-acid chain; its full sequence is Translation factor guf1, mitochondrial (665 aa).

Residues 1 to 53 constitute a mitochondrion transit peptide; it reads MRGCLQVLRWLSTSPARRPVSSGLRLRSYEIVSPSILRPFTSTVRRQAQASRN. The tr-type G domain maps to 67-247; sequence ERFRNFCIVA…TVIERIPAPV (181 aa). GTP contacts are provided by residues 76 to 83, 140 to 144, and 194 to 197; these read AHVDHGKS, DTPGH, and NKVD.

The protein belongs to the TRAFAC class translation factor GTPase superfamily. Classic translation factor GTPase family. LepA subfamily.

It localises to the mitochondrion inner membrane. It catalyses the reaction GTP + H2O = GDP + phosphate + H(+). Functionally, promotes mitochondrial protein synthesis. May act as a fidelity factor of the translation reaction, by catalyzing a one-codon backward translocation of tRNAs on improperly translocated ribosomes. Binds to mitochondrial ribosomes in a GTP-dependent manner. In Talaromyces stipitatus (strain ATCC 10500 / CBS 375.48 / QM 6759 / NRRL 1006) (Penicillium stipitatum), this protein is Translation factor guf1, mitochondrial (guf1).